Consider the following 526-residue polypeptide: Protein MGF 505-2R (526 aa).

The protein belongs to the asfivirus MGF 505 family.

Functionally, plays a role in virus cell tropism, and may be required for efficient virus replication in macrophages. The sequence is that of Protein MGF 505-2R from African swine fever virus (isolate Pig/Kenya/KEN-50/1950) (ASFV).